Reading from the N-terminus, the 420-residue chain is Serine hydroxymethyltransferase (420 aa).

Residues Leu-123 and 127-129 (GHL) each bind (6S)-5,6,7,8-tetrahydrofolate. Lys-232 is modified (N6-(pyridoxal phosphate)lysine). 357-359 (SPF) contributes to the (6S)-5,6,7,8-tetrahydrofolate binding site.

It belongs to the SHMT family. In terms of assembly, homodimer. It depends on pyridoxal 5'-phosphate as a cofactor.

The protein localises to the cytoplasm. It catalyses the reaction (6R)-5,10-methylene-5,6,7,8-tetrahydrofolate + glycine + H2O = (6S)-5,6,7,8-tetrahydrofolate + L-serine. It participates in one-carbon metabolism; tetrahydrofolate interconversion. It functions in the pathway amino-acid biosynthesis; glycine biosynthesis; glycine from L-serine: step 1/1. Functionally, catalyzes the reversible interconversion of serine and glycine with tetrahydrofolate (THF) serving as the one-carbon carrier. This reaction serves as the major source of one-carbon groups required for the biosynthesis of purines, thymidylate, methionine, and other important biomolecules. Also exhibits THF-independent aldolase activity toward beta-hydroxyamino acids, producing glycine and aldehydes, via a retro-aldol mechanism. In Streptococcus pyogenes serotype M2 (strain MGAS10270), this protein is Serine hydroxymethyltransferase.